The following is a 391-amino-acid chain: Histidinol-phosphate aminotransferase (391 aa).

Lys-245 is subject to N6-(pyridoxal phosphate)lysine.

This sequence belongs to the class-II pyridoxal-phosphate-dependent aminotransferase family. Histidinol-phosphate aminotransferase subfamily. In terms of assembly, homodimer. The cofactor is pyridoxal 5'-phosphate.

It catalyses the reaction L-histidinol phosphate + 2-oxoglutarate = 3-(imidazol-4-yl)-2-oxopropyl phosphate + L-glutamate. It participates in amino-acid biosynthesis; L-histidine biosynthesis; L-histidine from 5-phospho-alpha-D-ribose 1-diphosphate: step 7/9. This is Histidinol-phosphate aminotransferase from Bifidobacterium adolescentis (strain ATCC 15703 / DSM 20083 / NCTC 11814 / E194a).